The sequence spans 74 residues: ATP synthase subunit c (74 aa).

The next 2 membrane-spanning stretches (helical) occupy residues 8–28 (FIGIGFMAIGMYGAALGVSNI) and 52–72 (IGAGLAEAMGLFSFVIAMLLI).

The protein belongs to the ATPase C chain family. As to quaternary structure, F-type ATPases have 2 components, F(1) - the catalytic core - and F(0) - the membrane proton channel. F(1) has five subunits: alpha(3), beta(3), gamma(1), delta(1), epsilon(1). F(0) has three main subunits: a(1), b(2) and c(10-14). The alpha and beta chains form an alternating ring which encloses part of the gamma chain. F(1) is attached to F(0) by a central stalk formed by the gamma and epsilon chains, while a peripheral stalk is formed by the delta and b chains.

It is found in the cell inner membrane. Functionally, f(1)F(0) ATP synthase produces ATP from ADP in the presence of a proton or sodium gradient. F-type ATPases consist of two structural domains, F(1) containing the extramembraneous catalytic core and F(0) containing the membrane proton channel, linked together by a central stalk and a peripheral stalk. During catalysis, ATP synthesis in the catalytic domain of F(1) is coupled via a rotary mechanism of the central stalk subunits to proton translocation. Key component of the F(0) channel; it plays a direct role in translocation across the membrane. A homomeric c-ring of between 10-14 subunits forms the central stalk rotor element with the F(1) delta and epsilon subunits. This chain is ATP synthase subunit c, found in Rickettsia prowazekii (strain Madrid E).